Here is a 907-residue protein sequence, read N- to C-terminus: Translation initiation factor IF-2 (907 aa).

Positions 1–305 are disordered; it reads MSEGNDQDQG…SLASVRRQRE (305 aa). Residues 62-80 are compositionally biased toward gly residues; sequence SGSGSSGGGRAGGRGGSGG. 2 stretches are compositionally biased toward basic and acidic residues: residues 93–114 and 122–158; these read RVLE…EQEK and EEAR…ERRA. Low complexity predominate over residues 211–230; the sequence is PARPVTPSRPATPAATPQAP. Basic and acidic residues-rich tracts occupy residues 240-249 and 271-280; these read RVGEAEDDRR and KGGDSRRSGR. The tr-type G domain maps to 406–576; sequence PRPPVVTVMG…LLQAEMLDLR (171 aa). Positions 415–422 are G1; it reads GHVDHGKT. Residue 415-422 coordinates GTP; that stretch reads GHVDHGKT. The interval 440 to 444 is G2; it reads GITQH. The segment at 462–465 is G3; it reads DTPG. GTP contacts are provided by residues 462–466 and 516–519; these read DTPGH and NKCD. The G4 stretch occupies residues 516–519; that stretch reads NKCD. The segment at 552 to 554 is G5; that stretch reads SAL.

It belongs to the TRAFAC class translation factor GTPase superfamily. Classic translation factor GTPase family. IF-2 subfamily.

It localises to the cytoplasm. Functionally, one of the essential components for the initiation of protein synthesis. Protects formylmethionyl-tRNA from spontaneous hydrolysis and promotes its binding to the 30S ribosomal subunits. Also involved in the hydrolysis of GTP during the formation of the 70S ribosomal complex. This chain is Translation initiation factor IF-2, found in Gluconacetobacter diazotrophicus (strain ATCC 49037 / DSM 5601 / CCUG 37298 / CIP 103539 / LMG 7603 / PAl5).